Consider the following 395-residue polypeptide: Non-homologous end joining protein Ku (395 aa).

Residues 9–181 (ISFGLVSIPI…PPEDAAPDGD (173 aa)) enclose the Ku domain. Positions 252-395 (RAARTSRDDE…SASSRKRTSA (144 aa)) are disordered. Composition is skewed to polar residues over residues 283 to 292 (SSKTSGQSSG) and 311 to 320 (GKTVTRSGDS). Positions 351 to 361 (TARKTTAKKTT) are enriched in basic residues. Residues 362–371 (AKGTTGTTAA) are compositionally biased toward low complexity.

This sequence belongs to the prokaryotic Ku family. In terms of assembly, homodimer. Interacts with LigD.

Its function is as follows. With LigD forms a non-homologous end joining (NHEJ) DNA repair enzyme, which repairs dsDNA breaks with reduced fidelity. Binds linear dsDNA with 5'- and 3'- overhangs but not closed circular dsDNA nor ssDNA. Recruits and stimulates the ligase activity of LigD. The chain is Non-homologous end joining protein Ku from Streptomyces griseus subsp. griseus (strain JCM 4626 / CBS 651.72 / NBRC 13350 / KCC S-0626 / ISP 5235).